The primary structure comprises 88 residues: MALKEMVGTVVSDKMQKTVVVAVENRFPHPIYQKIISRTTRYKAHDAENHCKVGDRVRIKESPPISAHKRWTVTDVLVKGMKSKEAAK.

It belongs to the universal ribosomal protein uS17 family. Part of the 30S ribosomal subunit.

One of the primary rRNA binding proteins, it binds specifically to the 5'-end of 16S ribosomal RNA. This chain is Small ribosomal subunit protein uS17, found in Prochlorococcus marinus (strain NATL1A).